The primary structure comprises 973 residues: DNA repair protein rhp26 (973 aa).

A coiled-coil region spans residues 35 to 107 (ESREIEKKRL…DIKRRLNNED (73 aa)). The disordered stretch occupies residues 230-251 (RDQASASENNKDRGEFEGKDEW). The segment covering 238-251 (NNKDRGEFEGKDEW) has biased composition (basic and acidic residues). The Helicase ATP-binding domain maps to 289–490 (WELYCQEAGG…WNLFDFVFPG (202 aa)). Residue 302 to 309 (DEMGLGKT) coordinates ATP. The segment at 367–386 (SREKRQYESDASESEAEESK) is disordered. A DEAH box motif is present at residues 441 to 444 (DEGH). The Helicase C-terminal domain maps to 629-789 (VIRALLTLWK…RRFFKMTDLH (161 aa)). Disordered stretches follow at residues 803–846 (ETGS…KGKK), 863–882 (KYKP…STLG), and 930–973 (AVSS…KQRR). Positions 834–846 (DRKKHKIHDKGKK) are enriched in basic residues. Composition is skewed to polar residues over residues 868 to 882 (QESN…STLG) and 947 to 965 (STNV…SSTL).

It is found in the cytoplasm. The protein localises to the nucleus. Involved in transcription-coupled repair (TCR). This Schizosaccharomyces pombe (strain 972 / ATCC 24843) (Fission yeast) protein is DNA repair protein rhp26 (rhp26).